The primary structure comprises 627 residues: MGKVIGIDLGTTNSCVAVMEGKEPKVIDNAEGERTTPSIIAFANSERLVGQPAKRQAVTNPRNTIYAVKRLIGRNFTDPMVRKDQGLVPYNIVKADNGDAWVEADNNKYSPSQISAFILQKMKETAENYLGEKVTQAVITVPAYFNDAQRQATKDAGKIAGLEVLRIINEPTAAALAYGFEKSSSKTIAVYDLGGGTFDVSILEISDGVFEVKSTNGDTFLGGEDFDTRILNHLIDVFKKDSGIDLSKDPLALQRLKEAAEKAKKELSSTSATDINLPYITADSTGPKHLNIKFTRAELEKLVDDLIEKTIEPCRQALKDAGFKPTDIQEVVLVGGMTRMPKVQEAVKKFFGREPHKGVNPDEVVALGAAIQGGVLNKEVTDILLLDVTPLSLGIETLGGVFTRLIDRNTTIPSKKSQVFSTADDNQHAVTIRVFQGEREMAKDNKLLGQFNLEGIPPAPRGVPQIEVTFDIDANGIVHVSAKDKASGKEQKVTIQASGGLSDSEIEQMVKDAEHNADEDKKRKELIETKNAADSLVYSTEKTLREYGDKLSSEEKGAVEEALASLKSALESEDASLIKEKTNNLTAANMKIGETMYKAQTENQHSEANTVNDEKVVDADFQDVDKK.

At Thr197 the chain carries Phosphothreonine; by autocatalysis. The segment covering 602 to 611 (ENQHSEANTV) has biased composition (polar residues). The disordered stretch occupies residues 602–627 (ENQHSEANTVNDEKVVDADFQDVDKK). The span at 612-627 (NDEKVVDADFQDVDKK) shows a compositional bias: basic and acidic residues.

This sequence belongs to the heat shock protein 70 family.

In terms of biological role, acts as a chaperone. This is Chaperone protein DnaK from Rickettsia felis (strain ATCC VR-1525 / URRWXCal2) (Rickettsia azadi).